Consider the following 349-residue polypeptide: Guanine nucleotide-binding protein alpha-13 subunit (349 aa).

Gly2 is lipidated: N-myristoyl glycine. Cys3 carries the S-palmitoyl cysteine lipid modification. The G-alpha domain occupies 35–349; sequence SHIRLLLLGS…VFKDIMKRKR (315 aa). A G1 motif region spans residues 38-51; it reads RLLLLGSAESGKTT. Residues 43–50, 177–183, 202–206, 271–274, and Ala327 contribute to the GTP site; these read GSAESGKT, IMAYVPT, DIGGQ, and NEID. The segment at 175–183 is G2 motif; it reads DLIMAYVPT. Residue Thr183 participates in Mg(2+) binding. Positions 198-207 are G3 motif; it reads FQLFDIGGQK. Residues 267–274 are G4 motif; it reads YLFLNEID. The interval 325–330 is G5 motif; sequence CIAIDT.

Belongs to the G-alpha family. As to quaternary structure, g proteins are composed of 3 units; alpha, beta and gamma. The alpha chain contains the guanine nucleotide binding site.

Guanine nucleotide-binding proteins (G proteins) are involved as modulators or transducers in various transmembrane signaling systems. This is Guanine nucleotide-binding protein alpha-13 subunit from Caenorhabditis briggsae.